A 412-amino-acid chain; its full sequence is Divalent metal cation transporter MntH (412 aa).

Helical transmembrane passes span 19-39 (FALMGPAFIAAIGYIDPGNFA), 46-66 (ASFGYKLLWVVVWANLMAMLI), 94-114 (VWFYWVQAEIIAMATDLAEFI), 122-142 (LILGVSLLQGAVLTGIATFLI), 155-175 (LVIGGLLLFVAAAYIVELVFS), 196-216 (AVFLAAGVLGATIMPHVIYLH), 241-261 (IAMTIAGFVNLAMMATAAAAF), 290-310 (IFGLSLVAAGLSSTVVGTLAG), 329-349 (SVTMMPSFIVILMGLDPTRIL), 350-370 (VMSQVLLSFGIALALVPLLIF), and 389-409 (IGWMIVVLVVALNLWLLIGTL).

It belongs to the NRAMP family.

The protein localises to the cell inner membrane. Its function is as follows. H(+)-stimulated, divalent metal cation uptake system. This chain is Divalent metal cation transporter MntH, found in Enterobacter sp. (strain 638).